We begin with the raw amino-acid sequence, 311 residues long: Cell division protein ZipA (311 aa).

The Periplasmic portion of the chain corresponds to 1–6; sequence MENLQL. Residues 7-27 form a helical membrane-spanning segment; the sequence is VLFVLGAIAIIAVLVHGFWSI. At 28-311 the chain is on the cytoplasmic side; the sequence is RKQQPKSLKE…YLQRIRAQLD (284 aa). The interval 46–114 is disordered; the sequence is DQASVRDSQG…FALSDEPVQR (69 aa). Composition is skewed to basic and acidic residues over residues 62 to 83 and 94 to 103; these read GEVR…DKPV and RDVEDSRHEQ.

This sequence belongs to the ZipA family. In terms of assembly, interacts with FtsZ via their C-terminal domains.

The protein resides in the cell inner membrane. Functionally, essential cell division protein that stabilizes the FtsZ protofilaments by cross-linking them and that serves as a cytoplasmic membrane anchor for the Z ring. Also required for the recruitment to the septal ring of downstream cell division proteins. In Shewanella woodyi (strain ATCC 51908 / MS32), this protein is Cell division protein ZipA.